A 566-amino-acid polypeptide reads, in one-letter code: Phenylalanine--tRNA ligase beta subunit (566 aa).

The region spanning 287 to 362 is the B5 domain; that stretch reads YFQEEVEFNV…IGEGLSSFNP (76 aa). Positions 340, 346, 349, and 350 each coordinate Mg(2+).

It belongs to the phenylalanyl-tRNA synthetase beta subunit family. Type 2 subfamily. As to quaternary structure, tetramer of two alpha and two beta subunits. Mg(2+) serves as cofactor.

Its subcellular location is the cytoplasm. It carries out the reaction tRNA(Phe) + L-phenylalanine + ATP = L-phenylalanyl-tRNA(Phe) + AMP + diphosphate + H(+). The protein is Phenylalanine--tRNA ligase beta subunit of Borreliella burgdorferi (strain ATCC 35210 / DSM 4680 / CIP 102532 / B31) (Borrelia burgdorferi).